The following is a 429-amino-acid chain: Cell cycle protein kinase spo4 (429 aa).

Positions 40-402 (YHVVKLVGAG…KAKTALQHEF (363 aa)) constitute a Protein kinase domain. Residues 46-54 (VGAGSFSSV) and lysine 95 each bind ATP. The active-site Proton acceptor is the aspartate 182. At threonine 264 the chain carries Phosphothreonine.

Belongs to the protein kinase superfamily. Ser/Thr protein kinase family. CDC7 subfamily. In terms of assembly, interacts with spo6.

The protein localises to the nucleus. It carries out the reaction L-seryl-[protein] + ATP = O-phospho-L-seryl-[protein] + ADP + H(+). The enzyme catalyses L-threonyl-[protein] + ATP = O-phospho-L-threonyl-[protein] + ADP + H(+). Required for the initiation of meiosis II and progression through anaphase II. The polypeptide is Cell cycle protein kinase spo4 (spo4) (Schizosaccharomyces pombe (strain 972 / ATCC 24843) (Fission yeast)).